Reading from the N-terminus, the 352-residue chain is Molybdenum import ATP-binding protein ModC (352 aa).

The ABC transporter domain maps to 1–229; it reads MLELNFSQTL…SVMNPWLPKE (229 aa). Residue 31–38 coordinates ATP; the sequence is GVSGAGKT. One can recognise a Mop domain in the interval 289–352; sequence QTSIRNVLRA…AQIKSVSITA (64 aa).

It belongs to the ABC transporter superfamily. Molybdate importer (TC 3.A.1.8) family. In terms of assembly, the complex is composed of two ATP-binding proteins (ModC), two transmembrane proteins (ModB) and a solute-binding protein (ModA).

The protein resides in the cell inner membrane. It carries out the reaction molybdate(out) + ATP + H2O = molybdate(in) + ADP + phosphate + H(+). Its function is as follows. Part of the ABC transporter complex ModABC involved in molybdenum import. Responsible for energy coupling to the transport system. The protein is Molybdenum import ATP-binding protein ModC of Shigella boydii serotype 4 (strain Sb227).